Here is a 164-residue protein sequence, read N- to C-terminus: Peptide deformylase (164 aa).

Residues Cys-87 and His-129 each coordinate Fe cation. Glu-130 is an active-site residue. His-133 serves as a coordination point for Fe cation.

Belongs to the polypeptide deformylase family. Fe(2+) is required as a cofactor.

It carries out the reaction N-terminal N-formyl-L-methionyl-[peptide] + H2O = N-terminal L-methionyl-[peptide] + formate. In terms of biological role, removes the formyl group from the N-terminal Met of newly synthesized proteins. Requires at least a dipeptide for an efficient rate of reaction. N-terminal L-methionine is a prerequisite for activity but the enzyme has broad specificity at other positions. This Thermotoga maritima (strain ATCC 43589 / DSM 3109 / JCM 10099 / NBRC 100826 / MSB8) protein is Peptide deformylase.